A 467-amino-acid chain; its full sequence is Cysteine--tRNA ligase (467 aa).

Residue C29 coordinates Zn(2+). Residues 31–41 (ATVQGEPHIGH) carry the 'HIGH' region motif. Zn(2+) contacts are provided by C207, H232, and E236. Residues 263–267 (KMSKS) carry the 'KMSKS' region motif. K266 is a binding site for ATP. The tract at residues 446-467 (IDVTDTPNGPEWSLRTARGKAN) is disordered.

It belongs to the class-I aminoacyl-tRNA synthetase family. Monomer. Zn(2+) is required as a cofactor.

The protein resides in the cytoplasm. The enzyme catalyses tRNA(Cys) + L-cysteine + ATP = L-cysteinyl-tRNA(Cys) + AMP + diphosphate. In Nocardia farcinica (strain IFM 10152), this protein is Cysteine--tRNA ligase.